The sequence spans 146 residues: Nucleoside diphosphate kinase (146 aa).

The ATP site is built by Lys-11, Phe-59, Arg-87, Thr-93, Arg-104, and Asn-114. The active-site Pros-phosphohistidine intermediate is His-117.

The protein belongs to the NDK family. As to quaternary structure, homotetramer. Mg(2+) is required as a cofactor.

Its subcellular location is the cytoplasm. It catalyses the reaction a 2'-deoxyribonucleoside 5'-diphosphate + ATP = a 2'-deoxyribonucleoside 5'-triphosphate + ADP. The catalysed reaction is a ribonucleoside 5'-diphosphate + ATP = a ribonucleoside 5'-triphosphate + ADP. Its function is as follows. Major role in the synthesis of nucleoside triphosphates other than ATP. The ATP gamma phosphate is transferred to the NDP beta phosphate via a ping-pong mechanism, using a phosphorylated active-site intermediate. The chain is Nucleoside diphosphate kinase from Anaplasma marginale (strain Florida).